A 727-amino-acid chain; its full sequence is Platelet endothelial cell adhesion molecule (727 aa).

Residues 1 to 17 (MLLALGLTLVLYASLQA) form the signal peptide. The Extracellular segment spans residues 18–590 (EENSFTINSI…VRVFLAPWKK (573 aa)). Ig-like C2-type domains lie at 40–126 (GQQL…PKVT), 135–213 (GGVV…PIRS), 225–309 (PKFE…IMVN), 315–391 (PKPK…LVPI), 413–472 (GHAI…NCHS), and 488–578 (PVDE…RSST). Cys47 and Cys99 are disulfide-bonded. N-linked (GlcNAc...) asparagine glycans are attached at residues Asn74 and Asn141. 2 disulfide bridges follow: Cys142–Cys195 and Cys245–Cys293. N-linked (GlcNAc...) asparagine glycans are attached at residues Asn309, Asn345, Asn360, Asn424, and Asn540. Cystine bridges form between Cys336–Cys375, Cys420–Cys465, and Cys512–Cys561. A helical membrane pass occupies residues 591–609 (GLIAVVVIGVVIATLIVAA). The Cytoplasmic segment spans residues 610–727 (KCYFLRKAKA…SRTEGSLNGT (118 aa)). Cys611 carries S-palmitoyl cysteine lipidation. The tract at residues 642–672 (SEPSVEANSHYGYDDVSGNDAVKPINQNKDP) is disordered. 2 consecutive short sequence motifs (ITIM motif) follow at residues 677-682 (VEYTEV) and 700-705 (TVYSEI). Phosphotyrosine; by FER is present on residues Tyr679 and Tyr702. The interval 698 to 718 (TETVYSEIRKVDPNLMENRYS) is membrane-bound segment which detaches upon phosphorylation. Positions 710-727 (PNLMENRYSRTEGSLNGT) are may play a role in cytoprotective signaling. A phosphoserine mark is found at Ser718 and Ser723.

Trans-homodimer (via Ig-like C2-type 1 and Ig-like C2-type 2 domains); trans-homodimerization is required for cell-cell interaction. Forms a complex with BDKRB2 and GNAQ. Interacts with BDKRB2 and GNAQ. Interacts with PTPN11; Tyr-702 is critical for PTPN11 recruitment. Interacts with FER. Interacts with CD177; the interaction is Ca(2+)-dependent; the interaction is direct. Phosphorylated on Ser and Tyr residues by src kinases after cellular activation. Upon activation, phosphorylated on Ser-718 which probably initiates the dissociation of the membrane-interaction segment (residues 698-718) from the cell membrane allowing the sequential phosphorylation of Tyr-702 and Tyr-679. Constitutively phosphorylated on Ser-723 in resting platelets. Phosphorylated on tyrosine residues by FER and FES in response to FCER1 activation. In endothelial cells Fyn mediates mechanical-force (stretch or pull) induced tyrosine phosphorylation. In terms of processing, palmitoylation by ZDHHC21 is necessary for cell surface expression in endothelial cells and enrichment in membrane rafts. In terms of tissue distribution, expressed in lung and platelets (at protein level).

It is found in the cell membrane. It localises to the membrane raft. The protein resides in the cell junction. In terms of biological role, cell adhesion molecule which is required for leukocyte transendothelial migration (TEM) under most inflammatory conditions. Tyr-679 plays a critical role in TEM and is required for efficient trafficking of PECAM1 to and from the lateral border recycling compartment (LBRC) and is also essential for the LBRC membrane to be targeted around migrating leukocytes. Trans-homophilic interaction may play a role in endothelial cell-cell adhesion via cell junctions. Heterophilic interaction with CD177 plays a role in transendothelial migration of neutrophils. Homophilic ligation of PECAM1 prevents macrophage-mediated phagocytosis of neighboring viable leukocytes by transmitting a detachment signal. Promotes macrophage-mediated phagocytosis of apoptotic leukocytes by tethering them to the phagocytic cells; PECAM1-mediated detachment signal appears to be disabled in apoptotic leukocytes. Modulates bradykinin receptor BDKRB2 activation. Regulates bradykinin- and hyperosmotic shock-induced ERK1/2 activation in endothelial cells. Induces susceptibility to atherosclerosis. This chain is Platelet endothelial cell adhesion molecule (Pecam1), found in Mus musculus (Mouse).